Here is a 241-residue protein sequence, read N- to C-terminus: NAD-dependent protein deacetylase 2 (241 aa).

The region spanning 1–241 (MTGKPLVAIL…ALPALLRGLG (241 aa)) is the Deacetylase sirtuin-type domain. NAD(+) contacts are provided by Ala-13, Thr-17, Arg-25, Gln-92, Val-94, Asp-95, and His-112. Nicotinamide is bound by residues Val-94 and Asp-95. The Proton acceptor role is filled by His-112. Cys-120, Cys-123, Cys-145, and Cys-148 together coordinate Zn(2+). The NAD(+) site is built by Thr-186, Ser-187, Asn-211, and Ile-229.

It belongs to the sirtuin family. Class U subfamily. Zn(2+) is required as a cofactor.

Its subcellular location is the cytoplasm. The catalysed reaction is N(6)-acetyl-L-lysyl-[protein] + NAD(+) + H2O = 2''-O-acetyl-ADP-D-ribose + nicotinamide + L-lysyl-[protein]. Functionally, NAD-dependent protein deacetylase which modulates the activities of several enzymes which are inactive in their acetylated form. The polypeptide is NAD-dependent protein deacetylase 2 (Streptomyces coelicolor (strain ATCC BAA-471 / A3(2) / M145)).